The primary structure comprises 236 residues: 2,3,4,5-tetrahydropyridine-2,6-dicarboxylate N-acetyltransferase (236 aa).

It belongs to the transferase hexapeptide repeat family. DapH subfamily.

It carries out the reaction (S)-2,3,4,5-tetrahydrodipicolinate + acetyl-CoA + H2O = L-2-acetamido-6-oxoheptanedioate + CoA. It participates in amino-acid biosynthesis; L-lysine biosynthesis via DAP pathway; LL-2,6-diaminopimelate from (S)-tetrahydrodipicolinate (acetylase route): step 1/3. In terms of biological role, catalyzes the transfer of an acetyl group from acetyl-CoA to tetrahydrodipicolinate. This Clostridium botulinum (strain Alaska E43 / Type E3) protein is 2,3,4,5-tetrahydropyridine-2,6-dicarboxylate N-acetyltransferase.